The primary structure comprises 214 residues: Large ribosomal subunit protein uL4 (214 aa).

Positions 56-86 are disordered; that stretch reads THKVKNRAEVSGTGKKPWKQKSTGKARAGSK. The span at 71–85 shows a compositional bias: basic residues; that stretch reads KPWKQKSTGKARAGS.

It belongs to the universal ribosomal protein uL4 family. Part of the 50S ribosomal subunit.

In terms of biological role, one of the primary rRNA binding proteins, this protein initially binds near the 5'-end of the 23S rRNA. It is important during the early stages of 50S assembly. It makes multiple contacts with different domains of the 23S rRNA in the assembled 50S subunit and ribosome. Its function is as follows. Forms part of the polypeptide exit tunnel. The protein is Large ribosomal subunit protein uL4 of Mesomycoplasma hyopneumoniae (strain 232) (Mycoplasma hyopneumoniae).